A 277-amino-acid chain; its full sequence is Large ribosomal subunit protein uL2 (277 aa).

The segment at 219 to 277 (TVRGSVMNPNDHPHGGGEGKAPVGRKAPSTPWGKPALGLKTRNKKAKSDKLIVRRRNEK) is disordered. Residues 264–277 (AKSDKLIVRRRNEK) are compositionally biased toward basic and acidic residues.

Belongs to the universal ribosomal protein uL2 family. As to quaternary structure, part of the 50S ribosomal subunit. Forms a bridge to the 30S subunit in the 70S ribosome.

One of the primary rRNA binding proteins. Required for association of the 30S and 50S subunits to form the 70S ribosome, for tRNA binding and peptide bond formation. It has been suggested to have peptidyltransferase activity; this is somewhat controversial. Makes several contacts with the 16S rRNA in the 70S ribosome. In Streptococcus sanguinis (strain SK36), this protein is Large ribosomal subunit protein uL2.